Here is a 166-residue protein sequence, read N- to C-terminus: Large ribosomal subunit protein uL10 (166 aa).

The protein belongs to the universal ribosomal protein uL10 family. Part of the ribosomal stalk of the 50S ribosomal subunit. The N-terminus interacts with L11 and the large rRNA to form the base of the stalk. The C-terminus forms an elongated spine to which L12 dimers bind in a sequential fashion forming a multimeric L10(L12)X complex.

In terms of biological role, forms part of the ribosomal stalk, playing a central role in the interaction of the ribosome with GTP-bound translation factors. This is Large ribosomal subunit protein uL10 from Shewanella oneidensis (strain ATCC 700550 / JCM 31522 / CIP 106686 / LMG 19005 / NCIMB 14063 / MR-1).